The primary structure comprises 211 residues: MSERGLLIVFSGPSGVGKGTVRQEIFSTPDHKFEYSVSMTTRPQRPGEVDGVDYFFRTREEFEELIKTGQMLEYAEYVGNYYGTPLTYVNETLDKGIDVFLEIEVQGALQVKSKVPDGVFVFLTPPDLDELEDRLVGRGTDSQEVIAQRIERAKEEIALMREYDYAVVNDEVALAAERVKRIIETEHFRVERVIGRYDKMIKITKNPFKAK.

The 180-residue stretch at 5-184 (GLLIVFSGPS…AAERVKRIIE (180 aa)) folds into the Guanylate kinase-like domain. Position 12–19 (12–19 (GPSGVGKG)) interacts with ATP.

It belongs to the guanylate kinase family.

The protein localises to the cytoplasm. It catalyses the reaction GMP + ATP = GDP + ADP. In terms of biological role, essential for recycling GMP and indirectly, cGMP. This Streptococcus pyogenes serotype M3 (strain SSI-1) protein is Guanylate kinase.